We begin with the raw amino-acid sequence, 370 residues long: Ubiquitin carboxyl-terminal hydrolase 46 (370 aa).

Residues 35-369 form the USP domain; the sequence is FGLVNFGNTC…SGYILFYQSR (335 aa). Catalysis depends on Cys44, which acts as the Nucleophile. Zn(2+)-binding residues include Cys186, Cys189, Cys233, and Cys236. His317 (proton acceptor) is an active-site residue.

Belongs to the peptidase C19 family. USP12/USP46 subfamily. As to quaternary structure, interacts with WDR48.

It carries out the reaction Thiol-dependent hydrolysis of ester, thioester, amide, peptide and isopeptide bonds formed by the C-terminal Gly of ubiquitin (a 76-residue protein attached to proteins as an intracellular targeting signal).. Deubiquitinating enzyme that plays a role in behavior, possibly by regulating GABA action. Has almost no deubiquitinating activity by itself and requires the interaction with wdr48 to have a high activity. In Danio rerio (Zebrafish), this protein is Ubiquitin carboxyl-terminal hydrolase 46 (usp46).